Consider the following 275-residue polypeptide: Large ribosomal subunit protein uL2 (275 aa).

Positions 35-49 (DSQSSTAGRNNNGRI) are enriched in polar residues. Disordered stretches follow at residues 35 to 59 (DSQS…GGHK) and 224 to 275 (AMNP…RHKR). The span at 50–59 (TTRHKGGGHK) shows a compositional bias: basic residues.

The protein belongs to the universal ribosomal protein uL2 family. In terms of assembly, part of the 50S ribosomal subunit. Forms a bridge to the 30S subunit in the 70S ribosome.

One of the primary rRNA binding proteins. Required for association of the 30S and 50S subunits to form the 70S ribosome, for tRNA binding and peptide bond formation. It has been suggested to have peptidyltransferase activity; this is somewhat controversial. Makes several contacts with the 16S rRNA in the 70S ribosome. In Burkholderia cenocepacia (strain HI2424), this protein is Large ribosomal subunit protein uL2.